Reading from the N-terminus, the 83-residue chain is Mu-theraphotoxin-Hhn2b 2 (83 aa).

The signal sequence occupies residues methionine 1 to alanine 21. Residues serine 22–arginine 48 constitute a propeptide that is removed on maturation. Cystine bridges form between cysteine 50–cysteine 65, cysteine 57–cysteine 70, and cysteine 64–cysteine 77. A Leucine amide modification is found at leucine 81.

Belongs to the neurotoxin 10 (Hwtx-1) family. 14 (Hntx-1) subfamily. In terms of assembly, monomer. In terms of tissue distribution, expressed by the venom gland.

It localises to the secreted. In terms of biological role, weakly blocks the rat SCN2A/SCN1B (Nav1.2/beta-1) sodium channel (IC(50)=68 uM) and the insect sodium channel para/tipE (IC(50)=4.3 uM), without altering the activation or inactivation kinetics (depressant toxin). This Cyriopagopus hainanus (Chinese bird spider) protein is Mu-theraphotoxin-Hhn2b 2.